The sequence spans 385 residues: Glutamate 5-kinase (385 aa).

Lysine 17 provides a ligand contact to ATP. The substrate site is built by serine 64, aspartate 151, and asparagine 165. Residue 185 to 186 participates in ATP binding; it reads SD. In terms of domain architecture, PUA spans 291 to 367; that stretch reads SGTVRVDAGA…DQIENVLGYS (77 aa).

This sequence belongs to the glutamate 5-kinase family.

The protein localises to the cytoplasm. The enzyme catalyses L-glutamate + ATP = L-glutamyl 5-phosphate + ADP. It participates in amino-acid biosynthesis; L-proline biosynthesis; L-glutamate 5-semialdehyde from L-glutamate: step 1/2. Catalyzes the transfer of a phosphate group to glutamate to form L-glutamate 5-phosphate. The polypeptide is Glutamate 5-kinase (Methanosarcina mazei (strain ATCC BAA-159 / DSM 3647 / Goe1 / Go1 / JCM 11833 / OCM 88) (Methanosarcina frisia)).